The sequence spans 170 residues: Large ribosomal subunit protein uL5 (170 aa).

It belongs to the universal ribosomal protein uL5 family. In terms of assembly, part of the 50S ribosomal subunit; contacts the 5S rRNA and probably tRNA. Forms a bridge to the 30S subunit in the 70S ribosome.

This is one of the proteins that bind and probably mediate the attachment of the 5S RNA into the large ribosomal subunit, where it forms part of the central protuberance. In the 70S ribosome it contacts protein S13 of the 30S subunit (bridge B1b), connecting the 2 subunits; this bridge is implicated in subunit movement. May contact the P site tRNA; the 5S rRNA and some of its associated proteins might help stabilize positioning of ribosome-bound tRNAs. The polypeptide is Large ribosomal subunit protein uL5 (Thermoplasma volcanium (strain ATCC 51530 / DSM 4299 / JCM 9571 / NBRC 15438 / GSS1)).